The sequence spans 458 residues: Phosphomethylpyrimidine synthase (458 aa).

Substrate-binding positions include asparagine 80, methionine 109, tyrosine 139, histidine 175, 195–197, 236–239, and glutamate 275; these read SRG and DSLR. Histidine 279 serves as a coordination point for Zn(2+). Tyrosine 302 contributes to the substrate binding site. Histidine 343 lines the Zn(2+) pocket. Residues cysteine 423, cysteine 426, and cysteine 431 each contribute to the [4Fe-4S] cluster site.

The protein belongs to the ThiC family. Requires [4Fe-4S] cluster as cofactor.

It carries out the reaction 5-amino-1-(5-phospho-beta-D-ribosyl)imidazole + S-adenosyl-L-methionine = 4-amino-2-methyl-5-(phosphooxymethyl)pyrimidine + CO + 5'-deoxyadenosine + formate + L-methionine + 3 H(+). The protein operates within cofactor biosynthesis; thiamine diphosphate biosynthesis. Its function is as follows. Catalyzes the synthesis of the hydroxymethylpyrimidine phosphate (HMP-P) moiety of thiamine from aminoimidazole ribotide (AIR) in a radical S-adenosyl-L-methionine (SAM)-dependent reaction. This is Phosphomethylpyrimidine synthase from Cyanothece sp. (strain PCC 7425 / ATCC 29141).